Here is a 123-residue protein sequence, read N- to C-terminus: Small ribosomal subunit protein uS12 (123 aa).

The interval 1–21 (MPTIEQLVRKGRQAKPKKSKT) is disordered. The span at 9 to 20 (RKGRQAKPKKSK) shows a compositional bias: basic residues.

This sequence belongs to the universal ribosomal protein uS12 family. As to quaternary structure, part of the 30S ribosomal subunit. Contacts proteins S8 and S17. May interact with IF1 in the 30S initiation complex.

Functionally, with S4 and S5 plays an important role in translational accuracy. In terms of biological role, interacts with and stabilizes bases of the 16S rRNA that are involved in tRNA selection in the A site and with the mRNA backbone. Located at the interface of the 30S and 50S subunits, it traverses the body of the 30S subunit contacting proteins on the other side and probably holding the rRNA structure together. The combined cluster of proteins S8, S12 and S17 appears to hold together the shoulder and platform of the 30S subunit. The sequence is that of Small ribosomal subunit protein uS12 from Bifidobacterium longum (strain NCC 2705).